Here is a 54-residue protein sequence, read N- to C-terminus: Large ribosomal subunit protein bL33 (54 aa).

This sequence belongs to the bacterial ribosomal protein bL33 family.

The sequence is that of Large ribosomal subunit protein bL33 from Stenotrophomonas maltophilia (strain K279a).